We begin with the raw amino-acid sequence, 373 residues long: MVDLNGISPKNKGYYVALGLEGSANKLGVGVIKQFVDGSPTEIVSNIRDTYITPPGEGFLPRDTARHHKNWCVRLVKRALAEAGVTPGQLDAICFTKGPGMGAPLHSVVIVARTVSLLWDVPLVPVNHCIGHIEMGREITGAQNPVVLYVSGGNTQVIAYSNQKYRIFGETLDIAIGNCLDRFARTLKIPNDPSPGYNIEQMALKCKNKERLVELPYTVKGMDLSLSGILAYIDSLAKDLFRKNYSNKLLFDKKTHEQLVTVEDLCYALQETLFSMLVEITERAMAHVNSAHVLIVGGVGCNLRLQEMMEQMCMDRANGHVYATDERFCIDNGVMIAQAGLLQYRMGDYVKDFKETVVTQKFRTDEVLVSWRD.

Residues His-128, His-132, and Tyr-149 each coordinate a divalent metal cation. Substrate is bound by residues 149–153 (YVSGG), Asp-181, Gly-196, Glu-200, and Asn-302. A divalent metal cation is bound at residue Asp-331.

Belongs to the KAE1 / TsaD family. Component of the EKC/KEOPS complex composed of at least BUD32, CGI121, GON7, KAE1 and PCC1; the whole complex dimerizes. It depends on a divalent metal cation as a cofactor.

Its subcellular location is the cytoplasm. The protein localises to the nucleus. It carries out the reaction L-threonylcarbamoyladenylate + adenosine(37) in tRNA = N(6)-L-threonylcarbamoyladenosine(37) in tRNA + AMP + H(+). Functionally, component of the EKC/KEOPS complex that is required for the formation of a threonylcarbamoyl group on adenosine at position 37 (t(6)A37) in tRNAs that read codons beginning with adenine. The complex is probably involved in the transfer of the threonylcarbamoyl moiety of threonylcarbamoyl-AMP (TC-AMP) to the N6 group of A37. KAE1 likely plays a direct catalytic role in this reaction, but requires other protein(s) of the complex to fulfill this activity. The EKC/KEOPS complex also promotes both telomere uncapping and telomere elongation. The complex is required for efficient recruitment of transcriptional coactivators. The chain is tRNA N6-adenosine threonylcarbamoyltransferase from Candida glabrata (strain ATCC 2001 / BCRC 20586 / JCM 3761 / NBRC 0622 / NRRL Y-65 / CBS 138) (Yeast).